We begin with the raw amino-acid sequence, 237 residues long: MAGVSACIKYSMFTFNFLFWLCGILILALAIWVRVSNDSQAIFGSEDVGSSSYVAVDILIAVGAIIMILGFLGCCGAIKESRCMLLLFFIGLLLILLLQVATGILGAVFKSKSDRIVNETLYENTKLLSATGESEKQFQEAIIVFQEEFKCCGLVNGAADWGNNFQHYPELCACLDKQRPCQSYNGKQVYKETCISFIKDFLAKNLIIVIGISFGLAVIEILGLVFSMVLYCQIGNK.

At 1–9 (MAGVSACIK) the chain is on the cytoplasmic side. The helical transmembrane segment at 10-33 (YSMFTFNFLFWLCGILILALAIWV) threads the bilayer. Residues 34–57 (RVSNDSQAIFGSEDVGSSSYVAVD) lie on the Extracellular side of the membrane. Residues 58 to 72 (ILIAVGAIIMILGFL) form a helical membrane-spanning segment. Residues 73–83 (GCCGAIKESRC) lie on the Cytoplasmic side of the membrane. A helical membrane pass occupies residues 84–109 (MLLLFFIGLLLILLLQVATGILGAVF). The Extracellular segment spans residues 110-205 (KSKSDRIVNE…SFIKDFLAKN (96 aa)). N-linked (GlcNAc...) asparagine glycosylation occurs at asparagine 118. The chain crosses the membrane as a helical span at residues 206-230 (LIIVIGISFGLAVIEILGLVFSMVL). The Cytoplasmic portion of the chain corresponds to 231-237 (YCQIGNK).

The protein belongs to the tetraspanin (TM4SF) family. As to quaternary structure, forms homooligomers. Interacts with MEP1B. Interacts with integrin alpha3/ITGA3. Interacts with RICTOR and MTOR. Interacts with ADAM17. Interacts with ECE1. Gastric, colon, rectal, and pancreatic carcinomas.

It localises to the cell membrane. In terms of biological role, structural component of specialized membrane microdomains known as tetraspanin-enriched microdomains (TERMs), which act as platforms for receptor clustering and signaling. Participates thereby in diverse biological functions such as cell signal transduction, migration and protein trafficking. Promotes ADAM17-mediated TNF-alpha processing through recruitment of ADAM17 to tetraspanin-enriched micro-domains (TEMs). Forms a complex with RICTOR and integrin alpha3/ITGA3 to mediate mTORC2 activation and AKT1 phosphorylation leading to cell migration. Reduces apoptosis and autophagy induced by high glucose levels through forming a complex with mTOR and RICTOR. Contributes to the maintenance of intestinal epithelial barrier and plays a role in the regulation of intestine inflammation by switching interferon gamma receptor 1/IFNGR1 from clathrin-dependent to lipid raft-dependent endocytosis route to limit STAT1 activation magnitude and duration. Acts as a modulator of the endothelin axis by associating with endothelin converting enzyme ECE1 and regulating its activity of conversion of the endothelin-1 precursor to endothelin. The polypeptide is Tetraspanin-8 (TSPAN8) (Homo sapiens (Human)).